The following is an 82-amino-acid chain: Small ribosomal subunit protein bS18 (82 aa).

This sequence belongs to the bacterial ribosomal protein bS18 family. As to quaternary structure, part of the 30S ribosomal subunit. Forms a tight heterodimer with protein bS6.

Functionally, binds as a heterodimer with protein bS6 to the central domain of the 16S rRNA, where it helps stabilize the platform of the 30S subunit. In Rhizobium meliloti (strain 1021) (Ensifer meliloti), this protein is Small ribosomal subunit protein bS18.